Consider the following 754-residue polypeptide: LON peptidase N-terminal domain and RING finger protein 2 (754 aa).

TPR repeat units follow at residues Ile23–Arg58 and Gly59–Arg91. Residues Pro112 to Ala136 are disordered. Residues Ala115 to Pro125 show a composition bias toward low complexity. 3 TPR repeats span residues Leu197–Asp230, Asn231–Leu264, and Lys266–Cys298. Residues Gly398–Gly439 form a disordered region. The segment covering Leu426–Gly439 has biased composition (polar residues). A TPR 6 repeat occupies Phe447–Cys483. Residues Cys449 to Lys487 form an RING-type zinc finger. One can recognise a Lon N-terminal domain in the interval Met528–Thr737.

This is LON peptidase N-terminal domain and RING finger protein 2 (LONRF2) from Homo sapiens (Human).